The primary structure comprises 860 residues: Leucine--tRNA ligase (860 aa).

Positions 42–52 (PYPSGRLHMGH) match the 'HIGH' region motif. The short motif at 619–623 (KMSKS) is the 'KMSKS' region element. K622 serves as a coordination point for ATP.

The protein belongs to the class-I aminoacyl-tRNA synthetase family.

Its subcellular location is the cytoplasm. The catalysed reaction is tRNA(Leu) + L-leucine + ATP = L-leucyl-tRNA(Leu) + AMP + diphosphate. The polypeptide is Leucine--tRNA ligase (Escherichia coli O7:K1 (strain IAI39 / ExPEC)).